The primary structure comprises 310 residues: HPr kinase/phosphorylase (310 aa).

Catalysis depends on residues His136 and Lys157. 151–158 lines the ATP pocket; the sequence is GDSGIGKS. Ser158 is a binding site for Mg(2+). Asp175 (proton acceptor; for phosphorylation activity. Proton donor; for dephosphorylation activity) is an active-site residue. Residues 199-208 form an important for the catalytic mechanism of both phosphorylation and dephosphorylation region; sequence LEIRGLGIIN. Residue Glu200 participates in Mg(2+) binding. Arg241 is a catalytic residue. The tract at residues 262–267 is important for the catalytic mechanism of dephosphorylation; it reads PVRPGR.

Belongs to the HPrK/P family. Homohexamer. It depends on Mg(2+) as a cofactor.

The catalysed reaction is [HPr protein]-L-serine + ATP = [HPr protein]-O-phospho-L-serine + ADP + H(+). It catalyses the reaction [HPr protein]-O-phospho-L-serine + phosphate + H(+) = [HPr protein]-L-serine + diphosphate. Functionally, catalyzes the ATP- as well as the pyrophosphate-dependent phosphorylation of a specific serine residue in HPr, a phosphocarrier protein of the phosphoenolpyruvate-dependent sugar phosphotransferase system (PTS). HprK/P also catalyzes the pyrophosphate-producing, inorganic phosphate-dependent dephosphorylation (phosphorolysis) of seryl-phosphorylated HPr (P-Ser-HPr). The two antagonistic activities of HprK/P are regulated by several intracellular metabolites, which change their concentration in response to the absence or presence of rapidly metabolisable carbon sources (glucose, fructose, etc.) in the growth medium. Therefore, by controlling the phosphorylation state of HPr, HPrK/P is a sensor enzyme that plays a major role in the regulation of carbon metabolism and sugar transport: it mediates carbon catabolite repression (CCR), and regulates PTS-catalyzed carbohydrate uptake and inducer exclusion. In Staphylococcus aureus (strain Mu3 / ATCC 700698), this protein is HPr kinase/phosphorylase.